Here is a 247-residue protein sequence, read N- to C-terminus: Ribonuclease 3 (247 aa).

The 129-residue stretch at 21–149 (LQKLSKKIGI…LVGAIYLDQG (129 aa)) folds into the RNase III domain. Position 62 (Glu62) interacts with Mg(2+). Residue Asp66 is part of the active site. Residues Asn135 and Glu138 each coordinate Mg(2+). The active site involves Glu138. Residues 176-245 (DYKTQLQEYS…AKELYNRIRK (70 aa)) enclose the DRBM domain.

The protein belongs to the ribonuclease III family. Homodimer. It depends on Mg(2+) as a cofactor.

Its subcellular location is the cytoplasm. The enzyme catalyses Endonucleolytic cleavage to 5'-phosphomonoester.. Functionally, digests double-stranded RNA. Involved in the processing of primary rRNA transcript to yield the immediate precursors to the large and small rRNAs (23S and 16S). Processes some mRNAs, and tRNAs when they are encoded in the rRNA operon. Processes pre-crRNA and tracrRNA of type II CRISPR loci if present in the organism. The chain is Ribonuclease 3 from Leptospira interrogans serogroup Icterohaemorrhagiae serovar copenhageni (strain Fiocruz L1-130).